Reading from the N-terminus, the 436-residue chain is ATP-dependent RNA helicase RhlB (436 aa).

Residues 9 to 37 (QKFADFPLHKEVHQALNEAGFEFCTPIQA) carry the Q motif motif. In terms of domain architecture, Helicase ATP-binding spans 40-219 (LPILLEKKDI…YDHMNEPEKV (180 aa)). 53–60 (AQTGTGKT) lines the ATP pocket. The short motif at 165–168 (DEAD) is the DEAD box element. Residues 243–390 (KMPLLLSLLE…VTSYDSDALL (148 aa)) enclose the Helicase C-terminal domain. The tract at residues 392–436 (DIPPPVRIHRKPSTHTRNTRDRSSGRPQGGQRNGPRRHDKTRRHS) is disordered. Basic residues predominate over residues 425-436 (GPRRHDKTRRHS).

The protein belongs to the DEAD box helicase family. RhlB subfamily. Component of the RNA degradosome, which is a multiprotein complex involved in RNA processing and mRNA degradation.

The protein resides in the cytoplasm. The enzyme catalyses ATP + H2O = ADP + phosphate + H(+). In terms of biological role, DEAD-box RNA helicase involved in RNA degradation. Has RNA-dependent ATPase activity and unwinds double-stranded RNA. This Shewanella pealeana (strain ATCC 700345 / ANG-SQ1) protein is ATP-dependent RNA helicase RhlB.